The primary structure comprises 415 residues: ATP-dependent RNA helicase RhlB (415 aa).

The Q motif signature appears at 9–37 (QRFSALPLHPIVRGALAKKGFDFCTPIQA). One can recognise a Helicase ATP-binding domain in the interval 40-218 (LPISLNGRDV…FEDMNEPEYI (179 aa)). An ATP-binding site is contributed by 53–60 (AQTGTGKT). Positions 164-167 (DEAD) match the DEAD box motif. The region spanning 241-389 (DKMALLLTLM…VSQYETEALL (149 aa)) is the Helicase C-terminal domain.

The protein belongs to the DEAD box helicase family. RhlB subfamily. Component of the RNA degradosome, which is a multiprotein complex involved in RNA processing and mRNA degradation.

Its subcellular location is the cytoplasm. It catalyses the reaction ATP + H2O = ADP + phosphate + H(+). In terms of biological role, DEAD-box RNA helicase involved in RNA degradation. Has RNA-dependent ATPase activity and unwinds double-stranded RNA. This is ATP-dependent RNA helicase RhlB from Haemophilus influenzae (strain ATCC 51907 / DSM 11121 / KW20 / Rd).